We begin with the raw amino-acid sequence, 556 residues long: Formate--tetrahydrofolate ligase (556 aa).

An ATP-binding site is contributed by 65–72 (TPAGEGKS).

Belongs to the formate--tetrahydrofolate ligase family.

It carries out the reaction (6S)-5,6,7,8-tetrahydrofolate + formate + ATP = (6R)-10-formyltetrahydrofolate + ADP + phosphate. It participates in one-carbon metabolism; tetrahydrofolate interconversion. The polypeptide is Formate--tetrahydrofolate ligase (Streptococcus pneumoniae (strain Taiwan19F-14)).